Here is a 520-residue protein sequence, read N- to C-terminus: MSDQNKTKDYSKYFDFSDARVVSEDDEKKIIKIKGREITIYDQPNYRAGRKRKREDVQVLRPENLIPEEVANLGAGKKFLIRTYGCQMNVHDSENMSGLLLGMGFEETTETEEADIILLNTCAIRENAENKVFGEIGNLKPLKLEKPELIIGVCGCMSQEESVVGKIMEKHQHIDLIFGTHNIHRLPHLLRDAIFGKEMVIEVWSKEGDIVENMPRSRKNKTQAWVNIMYGCDKFCTYCIVPYTRGKERSRLPEDIIAEVRDLARQGYKEITLLGQNVNAYGKDLPGSYRLGDLMNEIHKIDIPRVRFTTSHPRDFDDHLIEVLAQGGNLVEHIHLPVQHGNSDILKLMGRKYTREQYITLANKIKQAIPNASFTTDLIVGFPNETEEQFQDMLSLVEEIQFDAAYTYIYSPREGTPAARMEDNVPMSVKKERLARLNALVNDISNKRNLDYQDKIVEVLVEGESKKNTDVLAGRTRTNRLVNFVGPKSAIGEIVYVKITEAKTWSLDGEIVSAPEVKAQ.

In terms of domain architecture, MTTase N-terminal spans 77 to 195; the sequence is KKFLIRTYGC…LPHLLRDAIF (119 aa). Positions 86, 122, 156, 232, 236, and 239 each coordinate [4Fe-4S] cluster. The region spanning 218–448 is the Radical SAM core domain; the sequence is RKNKTQAWVN…ALVNDISNKR (231 aa). The TRAM domain occupies 450–513; the sequence is LDYQDKIVEV…TWSLDGEIVS (64 aa).

This sequence belongs to the methylthiotransferase family. MiaB subfamily. Monomer. Requires [4Fe-4S] cluster as cofactor.

It localises to the cytoplasm. It catalyses the reaction N(6)-dimethylallyladenosine(37) in tRNA + (sulfur carrier)-SH + AH2 + 2 S-adenosyl-L-methionine = 2-methylsulfanyl-N(6)-dimethylallyladenosine(37) in tRNA + (sulfur carrier)-H + 5'-deoxyadenosine + L-methionine + A + S-adenosyl-L-homocysteine + 2 H(+). In terms of biological role, catalyzes the methylthiolation of N6-(dimethylallyl)adenosine (i(6)A), leading to the formation of 2-methylthio-N6-(dimethylallyl)adenosine (ms(2)i(6)A) at position 37 in tRNAs that read codons beginning with uridine. In Shouchella clausii (strain KSM-K16) (Alkalihalobacillus clausii), this protein is tRNA-2-methylthio-N(6)-dimethylallyladenosine synthase.